Reading from the N-terminus, the 200-residue chain is MTTAATPRLRIGVMGGTFDPIHNGHLVAASEVQQHLQLDEVIFVPTGQPWQKQTVTDGEHRYLMTVIATAANPRFTVSRVDIDRAGTTYTIDTLRDIRRTHPDAELFFITGADAIQQILGWKDVAELWDLAHFVAVTRPGHDLTESGLPHADVRLLEVPALAISSTDCRARVGRGFPVWYLVPDGVVQYISKHHLYRSPL.

The protein belongs to the NadD family.

The catalysed reaction is nicotinate beta-D-ribonucleotide + ATP + H(+) = deamido-NAD(+) + diphosphate. Its pathway is cofactor biosynthesis; NAD(+) biosynthesis; deamido-NAD(+) from nicotinate D-ribonucleotide: step 1/1. Functionally, catalyzes the reversible adenylation of nicotinate mononucleotide (NaMN) to nicotinic acid adenine dinucleotide (NaAD). The chain is Probable nicotinate-nucleotide adenylyltransferase from Clavibacter sepedonicus (Clavibacter michiganensis subsp. sepedonicus).